The following is a 1941-amino-acid chain: Diacylglycerol kinase eta (1941 aa).

Residues 93-186 form the PH domain; sequence SIIKEGYLLK…WLGSLKAATA (94 aa). Phorbol-ester/DAG-type zinc fingers lie at residues 206–256 and 279–330; these read HHHW…IANC and PHQW…AIAC. The region spanning 361 to 497 is the DAGKc domain; the sequence is GNFSPLLVFV…DRWSIMVFEK (137 aa). Disordered regions lie at residues 1030 to 1068, 1132 to 1164, 1215 to 1257, and 1276 to 1295; these read TTTLCSEHMGPPKPPRKKSMSALSKSQIHPRRRNSSPPR, CNSNNNSNNNSNSNSNNNNHNDGNSNDEPETPT, LESA…PSSS, and RRHSSHAPSLAVREYDKDKD. A compositionally biased stretch (low complexity) spans 1133 to 1155; the sequence is NSNNNSNNNSNSNSNNNNHNDGN. Positions 1878-1941 constitute an SAM domain; it reads WSVNEVVTWL…LQAIKDLSEN (64 aa).

The protein belongs to the eukaryotic diacylglycerol kinase family.

It is found in the cytoplasm. It catalyses the reaction a 1,2-diacyl-sn-glycerol + ATP = a 1,2-diacyl-sn-glycero-3-phosphate + ADP + H(+). Phosphorylates diacylglycerol (DAG) to generate phosphatidic acid (PA). This is Diacylglycerol kinase eta from Drosophila grimshawi (Hawaiian fruit fly).